Reading from the N-terminus, the 176-residue chain is NAD(P)H-quinone oxidoreductase subunit 6, chloroplastic (176 aa).

5 consecutive transmembrane segments (helical) span residues 10–30 (FILV…VLLP), 32–52 (PIYS…LYIL), 61–81 (AQLL…VMFL), 95–115 (VGDG…ITTI), and 152–172 (FLIP…GAIA).

Belongs to the complex I subunit 6 family. In terms of assembly, NDH is composed of at least 16 different subunits, 5 of which are encoded in the nucleus.

The protein resides in the plastid. It is found in the chloroplast thylakoid membrane. The enzyme catalyses a plastoquinone + NADH + (n+1) H(+)(in) = a plastoquinol + NAD(+) + n H(+)(out). It carries out the reaction a plastoquinone + NADPH + (n+1) H(+)(in) = a plastoquinol + NADP(+) + n H(+)(out). NDH shuttles electrons from NAD(P)H:plastoquinone, via FMN and iron-sulfur (Fe-S) centers, to quinones in the photosynthetic chain and possibly in a chloroplast respiratory chain. The immediate electron acceptor for the enzyme in this species is believed to be plastoquinone. Couples the redox reaction to proton translocation, and thus conserves the redox energy in a proton gradient. The protein is NAD(P)H-quinone oxidoreductase subunit 6, chloroplastic (ndhG) of Trachelium caeruleum (Blue throatwort).